Reading from the N-terminus, the 381-residue chain is Erythronate-4-phosphate dehydrogenase (381 aa).

Substrate contacts are provided by Ser-45 and Thr-67. NAD(+)-binding positions include 127–128 (QV), Asp-147, and Thr-176. Residue Arg-209 is part of the active site. Asp-233 is a binding site for NAD(+). Residue Glu-238 is part of the active site. His-255 (proton donor) is an active-site residue. Gly-258 is an NAD(+) binding site. Tyr-259 serves as a coordination point for substrate.

This sequence belongs to the D-isomer specific 2-hydroxyacid dehydrogenase family. PdxB subfamily. Homodimer.

The protein localises to the cytoplasm. The catalysed reaction is 4-phospho-D-erythronate + NAD(+) = (R)-3-hydroxy-2-oxo-4-phosphooxybutanoate + NADH + H(+). Its pathway is cofactor biosynthesis; pyridoxine 5'-phosphate biosynthesis; pyridoxine 5'-phosphate from D-erythrose 4-phosphate: step 2/5. Functionally, catalyzes the oxidation of erythronate-4-phosphate to 3-hydroxy-2-oxo-4-phosphonooxybutanoate. The polypeptide is Erythronate-4-phosphate dehydrogenase (Vibrio cholerae serotype O1 (strain ATCC 39315 / El Tor Inaba N16961)).